A 232-amino-acid chain; its full sequence is tRNA (guanine-N(1)-)-methyltransferase (232 aa).

S-adenosyl-L-methionine is bound by residues G108 and 128-133 (IGDFIM).

Belongs to the RNA methyltransferase TrmD family. As to quaternary structure, homodimer.

It is found in the cytoplasm. The catalysed reaction is guanosine(37) in tRNA + S-adenosyl-L-methionine = N(1)-methylguanosine(37) in tRNA + S-adenosyl-L-homocysteine + H(+). Its function is as follows. Specifically methylates guanosine-37 in various tRNAs. The chain is tRNA (guanine-N(1)-)-methyltransferase from Campylobacter fetus subsp. fetus (strain 82-40).